Here is an 89-residue protein sequence, read N- to C-terminus: Small ribosomal subunit protein uS15 (89 aa).

The protein belongs to the universal ribosomal protein uS15 family. As to quaternary structure, part of the 30S ribosomal subunit. Forms a bridge to the 50S subunit in the 70S ribosome, contacting the 23S rRNA.

One of the primary rRNA binding proteins, it binds directly to 16S rRNA where it helps nucleate assembly of the platform of the 30S subunit by binding and bridging several RNA helices of the 16S rRNA. Functionally, forms an intersubunit bridge (bridge B4) with the 23S rRNA of the 50S subunit in the ribosome. In Lactobacillus johnsonii (strain CNCM I-12250 / La1 / NCC 533), this protein is Small ribosomal subunit protein uS15.